Here is a 434-residue protein sequence, read N- to C-terminus: Isocitrate lyase (434 aa).

A substrate-binding site is contributed by 91-93; sequence SGW. Aspartate 157 provides a ligand contact to Mg(2+). The active-site Proton acceptor is cysteine 195. Substrate contacts are provided by residues 196–197, arginine 232, 317–321, and threonine 351; these read GH and NCSPS.

This sequence belongs to the isocitrate lyase/PEP mutase superfamily. Isocitrate lyase family. As to quaternary structure, homotetramer. Requires Mg(2+) as cofactor.

The catalysed reaction is D-threo-isocitrate = glyoxylate + succinate. Its pathway is carbohydrate metabolism; glyoxylate cycle; (S)-malate from isocitrate: step 1/2. Its function is as follows. Involved in the metabolic adaptation in response to environmental changes. Catalyzes the reversible formation of succinate and glyoxylate from isocitrate, a key step of the glyoxylate cycle, which operates as an anaplerotic route for replenishing the tricarboxylic acid cycle during growth on fatty acid substrates. The protein is Isocitrate lyase (aceA) of Salmonella typhimurium (strain LT2 / SGSC1412 / ATCC 700720).